The chain runs to 161 residues: Nucleotide-binding protein xcc-b100_3818 (161 aa).

The protein belongs to the YajQ family.

Its function is as follows. Nucleotide-binding protein. The protein is Nucleotide-binding protein xcc-b100_3818 of Xanthomonas campestris pv. campestris (strain B100).